Consider the following 369-residue polypeptide: MTTAVTAAVSFPSTKTTSLSARSSSVISPDKISYKKVPLYYRNVSATGKMGPIRAQIASDVEAPPPAPAKVEKHSKKMEEGITVNKFKPKTPYVGRCLLNTKITGDDAPGETWHMVFSHEGEIPYREGQSVGVIPDGEDKNGKPHKLRLYSIASSALGDFGDAKSVSLCVKRLIYTNDAGETIKGVCSNFLCDLKPGAEVKLTGPVGKEMLMPKDPNATIIMLGTGTGIAPFRSFLWKMFFEKHDDYKFNGLAWLFLGVPTSSSLLYKEEFEKMKEKAPDNFRLDFAVSREQTNEKGEKMYIQTRMAQYAVELWEMLKKDNTYFYMCGLKGMEKGIDDIMVSLAAAEGIDWIEYKRQLKKAEQWNVEVY.

The N-terminal 55 residues, 1 to 55, are a transit peptide targeting the chloroplast; it reads MTTAVTAAVSFPSTKTTSLSARSSSVISPDKISYKKVPLYYRNVSATGKMGPIRA. The 123-residue stretch at 90 to 212 folds into the FAD-binding FR-type domain; sequence KTPYVGRCLL…TGPVGKEMLM (123 aa). FAD is bound by residues 148–151, 169–171, Tyr-175, 186–188, and Thr-227; these read RLYS, CVK, and VCS. The NADP(+) site is built by Ser-151 and Lys-171. NADP(+) is bound by residues Thr-227, 259-260, 289-290, 299-301, 328-329, and Glu-367; these read VP, SR, KMY, and GL.

Belongs to the ferredoxin--NADP reductase type 1 family. FAD is required as a cofactor.

Its subcellular location is the plastid. It localises to the chloroplast stroma. The protein resides in the chloroplast thylakoid membrane. The catalysed reaction is 2 reduced [2Fe-2S]-[ferredoxin] + NADP(+) + H(+) = 2 oxidized [2Fe-2S]-[ferredoxin] + NADPH. It participates in energy metabolism; photosynthesis. In terms of biological role, may play a key role in regulating the relative amounts of cyclic and non-cyclic electron flow to meet the demands of the plant for ATP and reducing power. This chain is Ferredoxin--NADP reductase, chloroplastic (PETH), found in Spinacia oleracea (Spinach).